A 718-amino-acid chain; its full sequence is MSSALDEDTQQTIAAGRETAGAMLRAAQKDLQKVFIVFLVGFLGTFYALRLYVWEFFRGVTKAQMDASVSGNVSIIAQTPFDVILLQAKIGLVVGVLFALPPFIYVSRGALKARDAWPKSPVAPWKLALIGLTMVALFAAGVAYGYFVFFPFTFAFLAQNAISAGFTPSYSIVKWAQFIFLLTLSFGLASQLPLAMTGLSYAEVVPYELFRDKWRHAIVGIFAFGALFTPPDPFTQIMWAVPVILLYAFSLYLARVVVTAKRGSEKIDVKSTATTHWNLLAGVGVVVGLLVYAFYEYGGVELANDGLAAIGSDYVFLAPGSGVALGAFVVAGGFVGLAFGLAYLVYRDIERLERTEIGVGDPTKLDLSALDVAGVRAAPPEAFADLEEDEVMALASAAIDDGDKAKAQALIDRFDEAEADREAEAADAEDEPGELEDRTTRAGGAFVSELTEGETDEDDIGGYYTDIAFIVDSLTSRAFWVVGWFMLVLATTFGWLYTGGIRDVYDDFLGRLPAAVRPEEVLNVVALHPMEALIFEVKFSTILAVLATLPLVAYFVWPALRERNIIRKRRRTVFVWTGALAGGLLGGFALGYTYVAPTVITFLVEDALAANMIITYRITNFFWLIFFTTAGIGLLADVPILMVLLNTAGISYRMMRNRWREVTVFILAISAVFTPASITTMFMVTLPLMAAYGVGLGVLFVLTVGGRRDLSPARGAAE.

The next 8 membrane-spanning stretches (helical) occupy residues 34 to 54 (VFIV…LYVW), 84 to 104 (ILLQ…PPFI), 137 to 157 (LFAA…FAFL), 178 to 198 (FIFL…AMTG), 214 to 231 (WRHA…FTPP), 234 to 254 (FTQI…LYLA), 280 to 300 (LAGV…YGGV), and 325 to 345 (LGAF…AYLV). A disordered region spans residues 421-451 (REAEAADAEDEPGELEDRTTRAGGAFVSELT). Residues 425–434 (AADAEDEPGE) are compositionally biased toward acidic residues. Transmembrane regions (helical) follow at residues 478-498 (AFWV…WLYT), 539-559 (FSTI…VWPA), 572-592 (TVFV…ALGY), 621-641 (FFWL…VPIL), 661-681 (EVTV…ITTM), and 682-702 (FMVT…LFVL).

This sequence belongs to the TatC family. In terms of assembly, forms a complex with TatA.

It localises to the cell membrane. Part of the twin-arginine translocation (Tat) system that transports large folded proteins containing a characteristic twin-arginine motif in their signal peptide across membranes. The chain is Sec-independent protein translocase protein TatCt from Haloferax volcanii (strain ATCC 29605 / DSM 3757 / JCM 8879 / NBRC 14742 / NCIMB 2012 / VKM B-1768 / DS2) (Halobacterium volcanii).